The following is a 101-amino-acid chain: Small ribosomal subunit protein uS14 (101 aa).

The protein belongs to the universal ribosomal protein uS14 family. As to quaternary structure, part of the 30S ribosomal subunit. Contacts proteins S3 and S10.

Binds 16S rRNA, required for the assembly of 30S particles and may also be responsible for determining the conformation of the 16S rRNA at the A site. This chain is Small ribosomal subunit protein uS14, found in Enterobacter sp. (strain 638).